We begin with the raw amino-acid sequence, 337 residues long: MTQVFQGRSFLAEKDFTREEFEYLIDFAAHLKDLKKRGIPHHYLEGKNIALLFEKTSTRTRAAFTTAAIDLGAHPEYLGANDIQLGKKESTEDTAKVLGRMFDGIEFRGFSQRMVEELAEFSGVPVWNGLTDEWHPTQMLADYLTVKENFGKLEGLTLVYCGDGRNNVANSLLVAGTLLGVNVHIFSPKELFPAEDIVKLAEGYAKASGAHVLVTDNADEAVKGADVLYTDVWVSMGEEDKFEERVKLLKPYQVNMELVKKADNDNLIFLHCLPAFHDTNTVYGKDVAEKFGVEEMEVTDEVFRSKYARHFDQAENRMHTIKAVMAATLGNLFIPKV.

Carbamoyl phosphate is bound by residues 57–60 (STRT), Gln84, Arg108, and 135–138 (HPTQ). L-ornithine-binding positions include Asn167, Asp231, and 235–236 (SM). Residues 272–273 (CL) and Arg317 each bind carbamoyl phosphate.

This sequence belongs to the aspartate/ornithine carbamoyltransferase superfamily. OTCase family.

It is found in the cytoplasm. It catalyses the reaction carbamoyl phosphate + L-ornithine = L-citrulline + phosphate + H(+). Its pathway is amino-acid degradation; L-arginine degradation via ADI pathway; carbamoyl phosphate from L-arginine: step 2/2. Its function is as follows. Reversibly catalyzes the transfer of the carbamoyl group from carbamoyl phosphate (CP) to the N(epsilon) atom of ornithine (ORN) to produce L-citrulline. This chain is Ornithine carbamoyltransferase, found in Streptococcus equi subsp. zooepidemicus (strain MGCS10565).